We begin with the raw amino-acid sequence, 389 residues long: Na(+)/H(+) antiporter NhaA 1 (389 aa).

The next 11 helical transmembrane spans lie at 12–32, 62–82, 97–117, 128–148, 157–177, 184–204, 220–240, 260–280, 282–302, 331–351, and 365–385; these read VLNE…ALLV, FLLW…GLEL, IVLP…LFAL, GWAI…MMCG, IFLL…IAIF, IAAF…NLLG, ISVL…AFFI, FWIA…VNLS, IDIG…LFVG, LYGV…IDGL, and LAIL…LKFF.

The protein belongs to the NhaA Na(+)/H(+) (TC 2.A.33) antiporter family.

It localises to the cell inner membrane. It carries out the reaction Na(+)(in) + 2 H(+)(out) = Na(+)(out) + 2 H(+)(in). Functionally, na(+)/H(+) antiporter that extrudes sodium in exchange for external protons. This chain is Na(+)/H(+) antiporter NhaA 1, found in Campylobacter jejuni subsp. jejuni serotype O:2 (strain ATCC 700819 / NCTC 11168).